The primary structure comprises 672 residues: Peptidoglycan D,D-transpeptidase MrdA (672 aa).

A helical membrane pass occupies residues 21–41 (IFFAVGLVIICLLVLASRYAY). Ser-326 functions as the Acyl-ester intermediate in the catalytic mechanism. Asp-350, Asp-365, His-371, and Cys-384 together coordinate Zn(2+). Positions 616-672 (ANHQVNGGLMTAGIKPGELPSGNESASSTPATSAPTSAAASTPQATPTRPATNEVDE) are disordered. Residues 640–672 (SASSTPATSAPTSAAASTPQATPTRPATNEVDE) show a composition bias toward low complexity.

Belongs to the transpeptidase family. MrdA subfamily. As to quaternary structure, monomer. Requires Zn(2+) as cofactor.

It localises to the cell inner membrane. The catalysed reaction is Preferential cleavage: (Ac)2-L-Lys-D-Ala-|-D-Ala. Also transpeptidation of peptidyl-alanyl moieties that are N-acyl substituents of D-alanine.. Its pathway is cell wall biogenesis; peptidoglycan biosynthesis. Its activity is regulated as follows. Inhibited by the beta-lactams sulbactam and piperacillin-tazobactam. Its function is as follows. Catalyzes cross-linking of the peptidoglycan cell wall. Involved in the determination of the rod shape of the cell. In Acinetobacter baumannii (strain ATCC 19606 / DSM 30007 / JCM 6841 / CCUG 19606 / CIP 70.34 / NBRC 109757 / NCIMB 12457 / NCTC 12156 / 81), this protein is Peptidoglycan D,D-transpeptidase MrdA.